Consider the following 350-residue polypeptide: S-adenosylmethionine:tRNA ribosyltransferase-isomerase (350 aa).

Belongs to the QueA family. Monomer.

It localises to the cytoplasm. The catalysed reaction is 7-aminomethyl-7-carbaguanosine(34) in tRNA + S-adenosyl-L-methionine = epoxyqueuosine(34) in tRNA + adenine + L-methionine + 2 H(+). Its pathway is tRNA modification; tRNA-queuosine biosynthesis. Its function is as follows. Transfers and isomerizes the ribose moiety from AdoMet to the 7-aminomethyl group of 7-deazaguanine (preQ1-tRNA) to give epoxyqueuosine (oQ-tRNA). The chain is S-adenosylmethionine:tRNA ribosyltransferase-isomerase from Bacillus cereus (strain 03BB102).